We begin with the raw amino-acid sequence, 195 residues long: Pyruvoyl-dependent arginine decarboxylase AaxB (195 aa).

Ser-53 is subject to Pyruvic acid (Ser).

This sequence belongs to the pyruvoyl-dependent arginine decarboxylase family. Trimer of an alpha-beta dimer. It depends on pyruvate as a cofactor.

Its subcellular location is the cytoplasm. The catalysed reaction is L-arginine + H(+) = agmatine + CO2. Its function is as follows. Part of the AaxABC system, catalyzes the decarboxylation of L-arginine. The arginine uptake by the bacterium in the macrophage may be a virulence factor against the host innate immune response. This chain is Pyruvoyl-dependent arginine decarboxylase AaxB (aaxB), found in Chlamydia caviae (strain ATCC VR-813 / DSM 19441 / 03DC25 / GPIC) (Chlamydophila caviae).